A 142-amino-acid chain; its full sequence is MPSVNEFFIFFLIVWHTCECVGIGFEHLHLVIYLNLNLQNVRFYLMKLINHLIIEKSSLHLLISTIHSFIDILLSDFKCNSSTRKCTTGMSVDISKIYTAEYGHLKAKLDTIGGLYCDSKDVTIMKVYVLVPLTIVLNIQVL.

An N-terminal signal peptide occupies residues 1 to 20 (MPSVNEFFIFFLIVWHTCEC). N-linked (GlcNAc...) asparagine glycosylation occurs at N80.

This is an uncharacterized protein from Dictyostelium discoideum (Social amoeba).